We begin with the raw amino-acid sequence, 1075 residues long: Error-prone DNA polymerase (1075 aa).

This sequence belongs to the DNA polymerase type-C family. DnaE2 subfamily.

Its subcellular location is the cytoplasm. The catalysed reaction is DNA(n) + a 2'-deoxyribonucleoside 5'-triphosphate = DNA(n+1) + diphosphate. Its function is as follows. DNA polymerase involved in damage-induced mutagenesis and translesion synthesis (TLS). It is not the major replicative DNA polymerase. The protein is Error-prone DNA polymerase of Ralstonia nicotianae (strain ATCC BAA-1114 / GMI1000) (Ralstonia solanacearum).